The chain runs to 435 residues: Cyclin-J-like protein (435 aa).

In terms of domain architecture, Cyclin N-terminal spans 14–191 (DVHCTLREKE…LLEAFSWNLC (178 aa)). Positions 120-142 (SSNSPASAPHPPPTPPQVAETTG) are disordered.

It belongs to the cyclin family. Cyclin J subfamily.

The sequence is that of Cyclin-J-like protein (CCNJL) from Homo sapiens (Human).